Consider the following 512-residue polypeptide: MTQSALHTEFGGIAALRDALARRQVSAVELAQSGLDAAQAASGLNAFLHIDPDLTLAQARAADAALAAGTAGPLAGIPIAHKDAFVTRGWRTTAGSKMLAGYASPFDATVVERLAEAGAVSLGKLNCDEFAMGSGNENSAYGPVRNPWDTQAVPGGSSGGSAAAVAARLVAAATGTDTGGSVRQPAALCGVSGIKPTYGTVSRYGIIAFGSSLDQAGPLAPSSRDLLELLDVMTGFDPRDATSLQACDGQANESGRVRRGHDAAQAGYDAAGSQPLKGLRIGVPQEYFGAGLAPDVAAAVEAALAQFEQLGAVRVPVSLPRTELAIPAYYVIAPAEASSNLARYDGVRYGHRAAQYGDLNEMISRSRAEGFGDEVKRRILIGTYVLSHGYYDAYYLQAQRLRRLIAQDFQRAFAGQCDVIMGPVSPTVAKNIGDNRDDPTADWLADVYTLGVSLAGLPAMSVPCGFGGQDGRRPVGLQIIGNYFDEGRLLALADRYQQVTDWHQRAPVSQDA.

Residues lysine 82 and serine 157 each act as charge relay system in the active site. Serine 181 (acyl-ester intermediate) is an active-site residue.

The protein belongs to the amidase family. GatA subfamily. Heterotrimer of A, B and C subunits.

It carries out the reaction L-glutamyl-tRNA(Gln) + L-glutamine + ATP + H2O = L-glutaminyl-tRNA(Gln) + L-glutamate + ADP + phosphate + H(+). Its function is as follows. Allows the formation of correctly charged Gln-tRNA(Gln) through the transamidation of misacylated Glu-tRNA(Gln) in organisms which lack glutaminyl-tRNA synthetase. The reaction takes place in the presence of glutamine and ATP through an activated gamma-phospho-Glu-tRNA(Gln). In Bordetella pertussis (strain Tohama I / ATCC BAA-589 / NCTC 13251), this protein is Glutamyl-tRNA(Gln) amidotransferase subunit A.